The chain runs to 177 residues: uncharacterized protein (177 aa).

This is an uncharacterized protein from Grapevine virus A (isolate Is 151) (GVA).